Consider the following 129-residue polypeptide: Follitropin subunit beta (129 aa).

The N-terminal stretch at 1-20 is a signal peptide; the sequence is MKSLQFCFLFCCWKAICCNS. Intrachain disulfides connect C21-C69, C35-C84, C38-C122, C46-C100, C50-C102, and C105-C112. Residues N25 and N42 are each glycosylated (N-linked (GlcNAc...) asparagine).

It belongs to the glycoprotein hormones subunit beta family. As to quaternary structure, heterodimer. The active follitropin is a heterodimer composed of an alpha chain/CGA shared with other hormones and a unique beta chain/FSHB shown here.

Its subcellular location is the secreted. Together with the alpha chain CGA constitutes follitropin, the follicle-stimulating hormone, and provides its biological specificity to the hormone heterodimer. Binds FSHR, a G protein-coupled receptor, on target cells to activate downstream signaling pathways. Follitropin is involved in follicle development and spermatogenesis in reproductive organs. The polypeptide is Follitropin subunit beta (FSHB) (Sus scrofa (Pig)).